Here is a 154-residue protein sequence, read N- to C-terminus: MLSPRRVKFRKQQRGRMRGIATRGNTIAFGTFALQAQECGWITSRQIEASRRAMTRYTKRGGKIWIRIFPDKPVTMRAAETRMGSGKGNPEFWVAVIKPGRILFEIGGPEITEELAKEAMRLAQYKLPVKTKFLVKEEQEAAVEATAQTAAVES.

The protein belongs to the universal ribosomal protein uL16 family. As to quaternary structure, part of the 50S ribosomal subunit.

Its function is as follows. Binds 23S rRNA and is also seen to make contacts with the A and possibly P site tRNAs. In Synechococcus sp. (strain RCC307), this protein is Large ribosomal subunit protein uL16.